A 560-amino-acid chain; its full sequence is Eukaryotic translation initiation factor 3 subunit D-1 (560 aa).

The disordered stretch occupies residues 98–166 (VQKPPHQRGR…RGPPPKMRES (69 aa)). Over residues 100 to 121 (KPPHQRGRFRNMRNSRSGRGRN) the composition is skewed to basic residues. Position 128 is a phosphothreonine (T128). The span at 147 to 156 (GRGMGKKFGH) shows a compositional bias: basic residues. The interval 291-305 (EFDLLTVNESSVEPP) is RNA gate.

The protein belongs to the eIF-3 subunit D family. As to quaternary structure, component of the eukaryotic translation initiation factor 3 (eIF-3) complex. The eIF-3 complex interacts with pix.

It is found in the cytoplasm. In terms of biological role, mRNA cap-binding component of the eukaryotic translation initiation factor 3 (eIF-3) complex, which is involved in protein synthesis of a specialized repertoire of mRNAs and, together with other initiation factors, stimulates binding of mRNA and methionyl-tRNAi to the 40S ribosome. The eIF-3 complex specifically targets and initiates translation of a subset of mRNAs involved in cell proliferation. In the eIF-3 complex, eif3d specifically recognizes and binds the 7-methylguanosine cap of a subset of mRNAs. The sequence is that of Eukaryotic translation initiation factor 3 subunit D-1 from Drosophila sechellia (Fruit fly).